The chain runs to 86 residues: uncharacterized protein (86 aa).

The N-terminal stretch at 1–25 (MNLRKILLSSALSLGMLVSAAPVLA) is a signal peptide.

This is an uncharacterized protein from Bacillus subtilis (strain 168).